Reading from the N-terminus, the 424-residue chain is UDP-galactose transporter homolog 1 (424 aa).

6 helical membrane-spanning segments follow: residues 57 to 77 (LWQLAFCVAGIYASFLSWGVL), 107 to 127 (IVLNTIQSTFAAVTGFLYLYF), 144 to 164 (IIFPLVLVSISSSLASPFGYA), 173 to 193 (TFILAKSCKLLPVMFLHLTIF), 197 to 217 (YPLYKYGVVLLVTLGVATFTL), and 234 to 254 (TSGSSAWGIFLLSINLLLDGL). An N-linked (GlcNAc...) asparagine glycan is attached at N256. The next 3 helical transmembrane spans lie at 293–313 (LLIMPHLSSTGILHAILPVPI), 337–357 (SVLGFAAFGAMGQLFIFYTLS), and 380–400 (VFWFGHSLSAGQWLGIGLVFG).

Belongs to the nucleotide-sugar transporter family. SLC35B subfamily.

It is found in the endoplasmic reticulum membrane. Functionally, may be involved in specific transport of UDP-Gal from the cytosol to the Golgi lumen. Involved in the maintenance of optimal conditions for the folding of secretory pathway proteins in the endoplasmic reticulum. In Emericella nidulans (strain FGSC A4 / ATCC 38163 / CBS 112.46 / NRRL 194 / M139) (Aspergillus nidulans), this protein is UDP-galactose transporter homolog 1 (hut1).